Consider the following 24-residue polypeptide: Lantibiotic 107891 (24 aa).

The residue at position 2 (threonine 2) is a (E)-2,3-didehydrobutyrine. Residues 3-7 (SWSLC) constitute a cross-link (lanthionine (Ser-Cys)). Tryptophan 4 carries the 6'-chlorotryptophan modification. Serine 5 carries the 2,3-didehydroalanine (Ser) modification. The segment at residues 8–11 (TPGC) is a cross-link (beta-methyllanthionine (Thr-Cys)). 2 consecutive cross-links (lanthionine (Ser-Cys)) follow at residues 13-20 (SPGGGSNC) and 18-23 (SNCSFC). Residue proline 14 is modified to 3,4-dihydroxyproline; in form A1. Proline 14 carries the 4-hydroxyproline; in form A2 modification. Positions 21–24 (SFCC) form a cross-link, S-(2-aminovinyl)-D-cysteine (Ser-Cys).

This sequence belongs to the type A lantibiotic family. Post-translationally, maturation of lantibiotics involves the enzymatic conversion of Thr, and Ser into dehydrated AA and the formation of thioether bonds with cysteine. The C-terminal lanthionine undergoes decarboxylation. This is followed by membrane translocation and cleavage of the modified precursor. Occurs in 2 forms, A1 contains 3,4-dihydroxyproline at Pro-14, A2 contains 4-hydroxyproline at Pro-14. The patent report does not provide the stereochemistry of the modified prolines. In terms of processing, the patent report does not describe whether the 2,3-didehydrobutyrine is the E- or Z-isomer. In several diagrams it is shown as the E-isomer.

Functionally, lanthionine-containing peptide antibiotic (lantibiotic) active on Gram-positive bacteria. The bactericidal activity of lantibiotics is based on depolarization of energized bacterial cytoplasmic membranes, initiated by the formation of aqueous transmembrane pores. The chain is Lantibiotic 107891 from Microbispora sp. (strain 107891).